We begin with the raw amino-acid sequence, 433 residues long: UDP-N-acetylglucosamine 1-carboxyvinyltransferase 1 (433 aa).

22–23 provides a ligand contact to phosphoenolpyruvate; it reads KN. Arginine 95 serves as a coordination point for UDP-N-acetyl-alpha-D-glucosamine. Cysteine 119 (proton donor) is an active-site residue. A 2-(S-cysteinyl)pyruvic acid O-phosphothioketal modification is found at cysteine 119. Residues 124 to 128, aspartate 307, and valine 329 contribute to the UDP-N-acetyl-alpha-D-glucosamine site; that span reads RPVDL.

The protein belongs to the EPSP synthase family. MurA subfamily.

The protein resides in the cytoplasm. The enzyme catalyses phosphoenolpyruvate + UDP-N-acetyl-alpha-D-glucosamine = UDP-N-acetyl-3-O-(1-carboxyvinyl)-alpha-D-glucosamine + phosphate. The protein operates within cell wall biogenesis; peptidoglycan biosynthesis. Its function is as follows. Cell wall formation. Adds enolpyruvyl to UDP-N-acetylglucosamine. This is UDP-N-acetylglucosamine 1-carboxyvinyltransferase 1 from Latilactobacillus sakei subsp. sakei (strain 23K) (Lactobacillus sakei subsp. sakei).